We begin with the raw amino-acid sequence, 139 residues long: D-ribose pyranase (139 aa).

H20 functions as the Proton donor in the catalytic mechanism. Substrate is bound by residues D28, H106, and 128-130; that span reads YAN.

The protein belongs to the RbsD / FucU family. RbsD subfamily. As to quaternary structure, homodecamer.

The protein localises to the cytoplasm. The enzyme catalyses beta-D-ribopyranose = beta-D-ribofuranose. Its pathway is carbohydrate metabolism; D-ribose degradation; D-ribose 5-phosphate from beta-D-ribopyranose: step 1/2. Catalyzes the interconversion of beta-pyran and beta-furan forms of D-ribose. The sequence is that of D-ribose pyranase from Histophilus somni (strain 2336) (Haemophilus somnus).